Here is a 709-residue protein sequence, read N- to C-terminus: Heme/hemopexin utilization protein C (709 aa).

An N-terminal signal peptide occupies residues 1-21 (MRFSKLSLAITTTLVTANALA). The TBDR plug domain maps to 36–147 (DPSRFTYTPQ…LGGVVAMRTP (112 aa)). A TBDR beta-barrel domain is found at 158-709 (KFGVKIRQGY…NAKISAVYSF (552 aa)). The TonB C-terminal box signature appears at 692–709 (SLMEGTGRNAKISAVYSF).

This sequence belongs to the TonB-dependent receptor family.

The protein localises to the cell outer membrane. Required for utilization of free heme at low concentrations. This is Heme/hemopexin utilization protein C (hxuC) from Haemophilus influenzae (strain 86-028NP).